The primary structure comprises 554 residues: Glutamine--tRNA ligase (554 aa).

Residues 34–44 carry the 'HIGH' region motif; it reads PEPNGYLHIGH. Residues 35–37 and 41–47 contribute to the ATP site; these read EPN and HIGHAKS. Positions 67 and 212 each coordinate L-glutamine. ATP contacts are provided by residues threonine 231, 261–262, and 269–271; these read RL and MSK. Residues 268 to 272 carry the 'KMSKS' region motif; it reads VMSKR. Residues 317–324 are interaction with tRNA; that stretch reads TKQDNTIE.

This sequence belongs to the class-I aminoacyl-tRNA synthetase family. In terms of assembly, monomer.

The protein localises to the cytoplasm. The enzyme catalyses tRNA(Gln) + L-glutamine + ATP = L-glutaminyl-tRNA(Gln) + AMP + diphosphate. This Shigella flexneri serotype 5b (strain 8401) protein is Glutamine--tRNA ligase.